A 279-amino-acid polypeptide reads, in one-letter code: NH(3)-dependent NAD(+) synthetase (279 aa).

Residue 39–46 (GLSGGIDS) coordinates ATP. Asp45 is a binding site for Mg(2+). Deamido-NAD(+) is bound at residue Arg122. Thr142 contacts ATP. Glu147 contacts Mg(2+). The deamido-NAD(+) site is built by Lys155 and Asp162. ATP is bound by residues Lys171 and Ser193. A deamido-NAD(+)-binding site is contributed by 253–254 (HK).

The protein belongs to the NAD synthetase family. In terms of assembly, homodimer.

It catalyses the reaction deamido-NAD(+) + NH4(+) + ATP = AMP + diphosphate + NAD(+) + H(+). Its pathway is cofactor biosynthesis; NAD(+) biosynthesis; NAD(+) from deamido-NAD(+) (ammonia route): step 1/1. Its function is as follows. Catalyzes the ATP-dependent amidation of deamido-NAD to form NAD. Uses ammonia as a nitrogen source. This is NH(3)-dependent NAD(+) synthetase from Sulfolobus acidocaldarius (strain ATCC 33909 / DSM 639 / JCM 8929 / NBRC 15157 / NCIMB 11770).